We begin with the raw amino-acid sequence, 335 residues long: Trans-3-hydroxy-L-proline dehydratase (335 aa).

The active-site Proton acceptor is C91. Substrate is bound by residues 92-93 (GH), H222, and 256-257 (GS).

It belongs to the proline racemase family. In terms of assembly, homodimer.

The enzyme catalyses trans-3-hydroxy-L-proline = 1-pyrroline-2-carboxylate + H2O. In terms of biological role, catalyzes the dehydration of trans-3-hydroxy-L-proline (t3LHyp) to Delta(1)-pyrroline-2-carboxylate (Pyr2C). Does not possess neither proline racemase nor 4-hydroxyproline 2-epimerase activities. The polypeptide is Trans-3-hydroxy-L-proline dehydratase (Burkholderia cenocepacia (strain HI2424)).